The following is a 328-amino-acid chain: Phosphate acyltransferase (328 aa).

It belongs to the PlsX family. As to quaternary structure, homodimer. Probably interacts with PlsY.

The protein localises to the cytoplasm. The enzyme catalyses a fatty acyl-[ACP] + phosphate = an acyl phosphate + holo-[ACP]. It functions in the pathway lipid metabolism; phospholipid metabolism. Catalyzes the reversible formation of acyl-phosphate (acyl-PO(4)) from acyl-[acyl-carrier-protein] (acyl-ACP). This enzyme utilizes acyl-ACP as fatty acyl donor, but not acyl-CoA. The chain is Phosphate acyltransferase from Pseudothermotoga lettingae (strain ATCC BAA-301 / DSM 14385 / NBRC 107922 / TMO) (Thermotoga lettingae).